Here is a 309-residue protein sequence, read N- to C-terminus: Homoserine kinase (309 aa).

91–101 (PIGSGLGSSAC) contributes to the ATP binding site.

Belongs to the GHMP kinase family. Homoserine kinase subfamily.

The protein resides in the cytoplasm. The enzyme catalyses L-homoserine + ATP = O-phospho-L-homoserine + ADP + H(+). Its pathway is amino-acid biosynthesis; L-threonine biosynthesis; L-threonine from L-aspartate: step 4/5. In terms of biological role, catalyzes the ATP-dependent phosphorylation of L-homoserine to L-homoserine phosphate. The chain is Homoserine kinase from Yersinia pseudotuberculosis serotype O:1b (strain IP 31758).